Consider the following 237-residue polypeptide: MRPSRRAPDELRAVSLERGVVKYAEGSCLVKFGDTHVLVTATLEERLPPWLKGQGRGWVTAEYGMLPRATLERTRREASAGKQNGRTVEIQRLIGRSLRTIVDLEALGERQITVDCDVLQADGGTRTASITGAWVALADCLNWMKARNMIKGQVLRDNVAAISCGIYNGTPVLDLDYAEDSEAETDANFVMTGDGRLVEVQGTAERTPFSQDEFLQLMALAQKGVARLVDLQKMAVG.

Phosphate is bound by residues Arg86 and 124–126; that span reads GTR.

The protein belongs to the RNase PH family. Homohexameric ring arranged as a trimer of dimers.

The catalysed reaction is tRNA(n+1) + phosphate = tRNA(n) + a ribonucleoside 5'-diphosphate. Its function is as follows. Phosphorolytic 3'-5' exoribonuclease that plays an important role in tRNA 3'-end maturation. Removes nucleotide residues following the 3'-CCA terminus of tRNAs; can also add nucleotides to the ends of RNA molecules by using nucleoside diphosphates as substrates, but this may not be physiologically important. Probably plays a role in initiation of 16S rRNA degradation (leading to ribosome degradation) during starvation. The chain is Ribonuclease PH from Rhodopseudomonas palustris (strain ATCC BAA-98 / CGA009).